Consider the following 220-residue polypeptide: A-type ATP synthase subunit K (220 aa).

The next 6 membrane-spanning stretches (helical) occupy residues Leu-5–Ile-25, Phe-63–Ala-83, Leu-90–Ala-110, Leu-125–Phe-145, Ala-155–Ile-175, and Leu-195–Ile-215.

It belongs to the V-ATPase proteolipid subunit family. In terms of assembly, the A-type ATPase is composed of subunits A(3), B(3), C, D, E(1 or 2), F, H(2), I and K(x). Subunit K dimerizes and may form higher oligomers.

The protein resides in the cell membrane. Component of the A-type ATP synthase that produces ATP from ADP in the presence of a proton gradient across the membrane. The polypeptide is A-type ATP synthase subunit K (Methanocaldococcus jannaschii (strain ATCC 43067 / DSM 2661 / JAL-1 / JCM 10045 / NBRC 100440) (Methanococcus jannaschii)).